A 394-amino-acid chain; its full sequence is Elongation factor Tu (394 aa).

Residues 10-204 enclose the tr-type G domain; sequence KPHINVGTIG…FLDTYIPEPK (195 aa). The segment at 19-26 is G1; sequence GHVDHGKT. 19 to 26 is a GTP binding site; sequence GHVDHGKT. Thr26 is a binding site for Mg(2+). The G2 stretch occupies residues 60 to 64; sequence GITIN. Positions 81 to 84 are G3; that stretch reads DCPG. Residues 81–85 and 136–139 each bind GTP; these read DCPGH and NKCD. A G4 region spans residues 136 to 139; the sequence is NKCD. A G5 region spans residues 174–176; sequence SAL.

It belongs to the TRAFAC class translation factor GTPase superfamily. Classic translation factor GTPase family. EF-Tu/EF-1A subfamily. In terms of assembly, monomer.

Its subcellular location is the cytoplasm. It carries out the reaction GTP + H2O = GDP + phosphate + H(+). Its function is as follows. GTP hydrolase that promotes the GTP-dependent binding of aminoacyl-tRNA to the A-site of ribosomes during protein biosynthesis. This is Elongation factor Tu from Buchnera aphidicola subsp. Schizaphis graminum (strain Sg).